Here is a 261-residue protein sequence, read N- to C-terminus: Small ribosomal subunit protein mS23 (261 aa).

Residues 234–261 (NPSESWATDEKDPKKNDDIEEDVEEIKL) form a disordered region. Basic and acidic residues predominate over residues 241–250 (TDEKDPKKND). Residues 251-261 (DIEEDVEEIKL) are compositionally biased toward acidic residues.

The protein belongs to the mitochondrion-specific ribosomal protein mS23 family. Component of the mitochondrial small ribosomal subunit.

The protein resides in the mitochondrion. In Vanderwaltozyma polyspora (strain ATCC 22028 / DSM 70294 / BCRC 21397 / CBS 2163 / NBRC 10782 / NRRL Y-8283 / UCD 57-17) (Kluyveromyces polysporus), this protein is Small ribosomal subunit protein mS23 (RSM25).